The following is a 133-amino-acid chain: FPRL1 inhibitory protein (133 aa).

Positions 1–28 (MKKNITKTIIASTVIAAGLLTQTNDAKA) are cleaved as a signal peptide.

It belongs to the CHIPS/FLIPr family.

The protein localises to the secreted. In terms of biological role, may be involved in countering the first line of host defense mechanisms. Impairs the leukocyte response to FPRL1 agonists by binding directly to host FPRL1. The chain is FPRL1 inhibitory protein (flr) from Staphylococcus aureus (strain Mu50 / ATCC 700699).